A 327-amino-acid polypeptide reads, in one-letter code: DNA repair protein XRCC4 (327 aa).

An interaction with IFFO1 region spans residues 1-211 (MERKVSRISL…QLEKNLKPER (211 aa)). Ser-53 is subject to Phosphoserine. Coiled coils occupy residues 133 to 153 (IAEKQAKNEHLQKENDRLLRD) and 183 to 213 (LNEKKTKIRSLHKLLDEIQQLEKNLKPERET). Interaction with LIG4 stretches follow at residues 179-210 (FILVLNEKKTKIRSLHKLLDEIQQLEKNLKPE) and 179-211 (FILVLNEKKTKIRSLHKLLDEIQQLEKNLKPER). Ser-192 is modified (phosphoserine). Lys-208 participates in a covalent cross-link: Glycyl lysine isopeptide (Lys-Gly) (interchain with G-Cter in SUMO). Phosphotyrosine is present on Tyr-226. Residue Ser-229 is modified to Phosphoserine. Phosphothreonine is present on Thr-230. Residues Ser-249 and Ser-253 each carry the phosphoserine modification. Residues 255–327 (DVTDIAPSRK…RNSSPEDIFD (73 aa)) form a disordered region. A Nuclear localization signal motif is present at residues 263–268 (RKRRHH). Residue Lys-289 forms a Glycyl lysine isopeptide (Lys-Gly) (interchain with G-Cter in ubiquitin) linkage. A phosphoserine mark is found at Ser-294, Ser-295, Ser-308, and Ser-313. Polar residues predominate over residues 308–327 (SAGNMSLETLRNSSPEDIFD). A Phosphothreonine modification is found at Thr-316. 2 positions are modified to phosphoserine: Ser-320 and Ser-321.

Belongs to the XRCC4-XLF family. XRCC4 subfamily. Homodimer and homotetramer in solution. Interacts with NHEJ1/XLF; the interaction is direct and is mediated via a head-to-head interaction between N-terminal head regions. Interacts with LIG4; the LIG4-XRCC4 subcomplex has a 1:2 stoichiometry and XRCC4 is required for LIG4 stability. Component of the core long-range non-homologous end joining (NHEJ) complex (also named DNA-PK complex) composed of PRKDC, LIG4, XRCC4, XRCC6/Ku70, XRCC5/Ku86 and NHEJ1/XLF. Additional component of the NHEJ complex includes PAXX. Following autophosphorylation, PRKDC dissociates from DNA, leading to formation of the short-range NHEJ complex, composed of LIG4, XRCC4, XRCC6/Ku70, XRCC5/Ku86 and NHEJ1/XLF. Interacts with PRKDC; the interaction is direct. Interacts with XRCC6/Ku70; the interaction is direct. Interacts with APTX and APLF. Forms a heterotetramer with IFFO1; the interaction involves LIG4-free XRCC4 and leads to the relocalization of IFFO1 to the sites of DNA damage. Interacts with PNKP; mainly interacts with PNKP when phosphorylated at Thr-230, but is also able to interact at much lower level with PNKP when not unphosphorylated. Interacts with POLL (DNA polymerase lambda). As to quaternary structure, interacts with XKR4; interacts with the processed form of XKR4, which is cleaved by caspase. Post-translationally, phosphorylated by PRKDC at the C-terminus in response to DNA damage; Ser-253 constitutes the main phosphorylation sites. Phosphorylations by PRKDC at the C-terminus of XRCC4 and NHEJ1/XLF are highly redundant and regulate ability of the XRCC4-NHEJ1/XLF subcomplex to bridge DNA. Phosphorylation by PRKDC does not prevent interaction with NHEJ1/XLF but disrupts ability to bridge DNA and promotes detachment from DNA. Phosphorylation at Ser-320 and Ser-321 by PRKDC promotes recognition by the SCF(FBXW7) complex and subsequent ubiquitination via 'Lys-63'-linked ubiquitin. Phosphorylation at Thr-230 by CK2 promotes interaction with PNKP; regulating PNKP activity and localization to DNA damage sites. Phosphorylation by CK2 promotes interaction with APTX. Ubiquitinated at Lys-289 by the SCF(FBXW7) complex via 'Lys-63'-linked ubiquitination, thereby promoting double-strand break repair: the SCF(FBXW7) complex specifically recognizes XRCC4 when phosphorylated at Ser-320 and Ser-321 by PRKDC, and 'Lys-63'-linked ubiquitination facilitates DNA non-homologous end joining (NHEJ) by enhancing association with XRCC5/Ku80 and XRCC6/Ku70. Monoubiquitinated. In terms of processing, undergoes proteolytic processing by caspase-3 (CASP3). This generates the protein XRCC4, C-terminus (XRCC4/C), which translocates to the cytoplasm and activates phospholipid scramblase activity of XKR4, thereby promoting phosphatidylserine exposure on apoptotic cell surface.

Its subcellular location is the nucleus. It localises to the chromosome. The protein localises to the cytoplasm. Its function is as follows. DNA non-homologous end joining (NHEJ) core factor, required for double-strand break repair and V(D)J recombination. Acts as a scaffold protein that regulates recruitment of other proteins to DNA double-strand breaks (DSBs). Associates with NHEJ1/XLF to form alternating helical filaments that bridge DNA and act like a bandage, holding together the broken DNA until it is repaired. The XRCC4-NHEJ1/XLF subcomplex binds to the DNA fragments of a DSB in a highly diffusive manner and robustly bridges two independent DNA molecules, holding the broken DNA fragments in close proximity to one other. The mobility of the bridges ensures that the ends remain accessible for further processing by other repair factors. Plays a key role in the NHEJ ligation step of the broken DNA during DSB repair via direct interaction with DNA ligase IV (LIG4): the LIG4-XRCC4 subcomplex reseals the DNA breaks after the gap filling is completed. XRCC4 stabilizes LIG4, regulates its subcellular localization and enhances LIG4's joining activity. Binding of the LIG4-XRCC4 subcomplex to DNA ends is dependent on the assembly of the DNA-dependent protein kinase complex DNA-PK to these DNA ends. Promotes displacement of PNKP from processed strand break termini. In terms of biological role, acts as an activator of the phospholipid scramblase activity of XKR4. This form, which is generated upon caspase-3 (CASP3) cleavage, translocates into the cytoplasm and interacts with XKR4, thereby promoting phosphatidylserine scramblase activity of XKR4 and leading to phosphatidylserine exposure on apoptotic cell surface. This is DNA repair protein XRCC4 from Cricetulus griseus (Chinese hamster).